Here is a 341-residue protein sequence, read N- to C-terminus: Paired box protein Pax-9 (341 aa).

The segment at residues 4–130 (AFGEVNQLGG…SSISRILRNK (127 aa)) is a DNA-binding region (paired). Positions 7-63 (EVNQLGGVFVNGRPLPNAIRLRIVELAQLGIRPCDISRQLRVSHGCVSKILARYNET) are PAI subdomain. Residues 82–130 (TVVKHIRTYKQRDPGIFAWEIRDRLLADGVCDKYNVPSVSSISRILRNK) are RED subdomain. The segment at 168–189 (AAAAKVPTPPGVPAIPGSVAMP) is interaction with KDM5B.

As to quaternary structure, interacts with KDM5B.

Its subcellular location is the nucleus. Functionally, transcription factor required for normal development of thymus, parathyroid glands, ultimobranchial bodies, teeth, skeletal elements of skull and larynx as well as distal limbs. The chain is Paired box protein Pax-9 (PAX9) from Propithecus coquereli (Coquerel's sifaka).